We begin with the raw amino-acid sequence, 182 residues long: Adenine phosphoribosyltransferase (182 aa).

The protein belongs to the purine/pyrimidine phosphoribosyltransferase family. As to quaternary structure, homodimer.

Its subcellular location is the cytoplasm. It carries out the reaction AMP + diphosphate = 5-phospho-alpha-D-ribose 1-diphosphate + adenine. It functions in the pathway purine metabolism; AMP biosynthesis via salvage pathway; AMP from adenine: step 1/1. Its function is as follows. Catalyzes a salvage reaction resulting in the formation of AMP, that is energically less costly than de novo synthesis. In Campylobacter fetus subsp. fetus (strain 82-40), this protein is Adenine phosphoribosyltransferase.